The primary structure comprises 366 residues: Probable neutral protease 2 homolog B (366 aa).

Positions 1–19 (MQVIVALAALSSLAAPALG) are cleaved as a signal peptide. Positions 20–189 (FSIPRGVPVS…RGPRSRITKR (170 aa)) are excised as a propeptide. Disulfide bonds link Cys-197–Cys-267, Cys-274–Cys-292, and Cys-306–Cys-366. His-317 is a binding site for Zn(2+). Glu-318 is an active-site residue. Residues His-321 and Asp-332 each contribute to the Zn(2+) site.

It belongs to the peptidase M35 family. Requires Zn(2+) as cofactor.

It localises to the secreted. The catalysed reaction is Preferential cleavage of bonds with hydrophobic residues in P1'. Also 3-Asn-|-Gln-4 and 8-Gly-|-Ser-9 bonds in insulin B chain.. Probable secreted metalloprotease that shows high activities on basic nuclear substrates such as histone and protamine. May be involved in virulence. This Trichophyton rubrum (Athlete's foot fungus) protein is Probable neutral protease 2 homolog B (NpII-B).